A 59-amino-acid chain; its full sequence is GEIECRSSECCPSGKHLCEGGFVHYCCPNDRYMSCGFLGFGTCYCWKAAYYEYGSTPTC.

Contains 5 disulfide bonds.

It localises to the secreted. It is found in the nematocyst. The polypeptide is U-actitoxin-Aer2b (Anemonia erythraea (Sea anemone)).